We begin with the raw amino-acid sequence, 357 residues long: Chorismate synthase (357 aa).

NADP(+) is bound by residues Arg-48 and Arg-54. FMN contacts are provided by residues 125–127, 238–239, Gly-278, 293–297, and Arg-319; these read RSS, NA, and KPTSS.

It belongs to the chorismate synthase family. Homotetramer. FMNH2 serves as cofactor.

It catalyses the reaction 5-O-(1-carboxyvinyl)-3-phosphoshikimate = chorismate + phosphate. Its pathway is metabolic intermediate biosynthesis; chorismate biosynthesis; chorismate from D-erythrose 4-phosphate and phosphoenolpyruvate: step 7/7. Catalyzes the anti-1,4-elimination of the C-3 phosphate and the C-6 proR hydrogen from 5-enolpyruvylshikimate-3-phosphate (EPSP) to yield chorismate, which is the branch point compound that serves as the starting substrate for the three terminal pathways of aromatic amino acid biosynthesis. This reaction introduces a second double bond into the aromatic ring system. This chain is Chorismate synthase, found in Blochmanniella floridana.